The sequence spans 510 residues: UDP-N-acetylmuramoyl-tripeptide--D-alanyl-D-alanine ligase (510 aa).

136 to 142 is an ATP binding site; that stretch reads GSSGKTS.

Belongs to the MurCDEF family. MurF subfamily.

It localises to the cytoplasm. The catalysed reaction is D-alanyl-D-alanine + UDP-N-acetyl-alpha-D-muramoyl-L-alanyl-gamma-D-glutamyl-meso-2,6-diaminopimelate + ATP = UDP-N-acetyl-alpha-D-muramoyl-L-alanyl-gamma-D-glutamyl-meso-2,6-diaminopimeloyl-D-alanyl-D-alanine + ADP + phosphate + H(+). Its pathway is cell wall biogenesis; peptidoglycan biosynthesis. In terms of biological role, involved in cell wall formation. Catalyzes the final step in the synthesis of UDP-N-acetylmuramoyl-pentapeptide, the precursor of murein. This chain is UDP-N-acetylmuramoyl-tripeptide--D-alanyl-D-alanine ligase, found in Mycobacterium tuberculosis (strain CDC 1551 / Oshkosh).